A 466-amino-acid chain; its full sequence is MKLFNTMTRQKEEFKPIKDGEVSMYVCGPTVYNYFHIGNGRTFLVFDTIRRYFEYRGYKVNFIQNFTDIDDKMIKKANEENITVKELGDRFIHEYYKDADGLNIKRATANPRATEYMDEIIQFVKDLIDKGYAYEVNGDVYFSTKQFKEYGKLSGQNLDDLQAGARISVDERKKDPMDFAIWKSEKPGEPSWNCPWGKGRPGWHIECSCMAHKLLGDTIDIHAGGADLVFPHHENEIAQSEARNGKTFANYWMHSAYLNINNKKMSKSLNNFFTTREILEKYDAEVIRLFMLSAHYRTPLNFSDDLLQSAKASNERLYNAIGNLERLLDEVKVDKVTENEKEYVKNLESYKEKYIEKMDDDFNTADAISVIFDLVKDINTNINTESSKELVEYSLELIRELGKPLGILQKSTMLDLNAEIEKLIEQRQQARKDKDWALADKIRDDLKARGIVLEDTPQGVRWKREQ.

Cys27 serves as a coordination point for Zn(2+). The 'HIGH' region motif lies at 29 to 39 (PTVYNYFHIGN). Cys207, His232, and Glu236 together coordinate Zn(2+). Positions 264 to 268 (KMSKS) match the 'KMSKS' region motif. Lys267 contributes to the ATP binding site.

It belongs to the class-I aminoacyl-tRNA synthetase family. As to quaternary structure, monomer. Requires Zn(2+) as cofactor.

The protein localises to the cytoplasm. It carries out the reaction tRNA(Cys) + L-cysteine + ATP = L-cysteinyl-tRNA(Cys) + AMP + diphosphate. The polypeptide is Cysteine--tRNA ligase (Clostridium novyi (strain NT)).